Here is a 362-residue protein sequence, read N- to C-terminus: UDP-N-acetylglucosamine--N-acetylmuramyl-(pentapeptide) pyrophosphoryl-undecaprenol N-acetylglucosamine transferase (362 aa).

UDP-N-acetyl-alpha-D-glucosamine is bound by residues 10–12 (TGG), N124, S194, I249, and Q294.

Belongs to the glycosyltransferase 28 family. MurG subfamily.

It localises to the cell membrane. The catalysed reaction is Mur2Ac(oyl-L-Ala-gamma-D-Glu-L-Lys-D-Ala-D-Ala)-di-trans,octa-cis-undecaprenyl diphosphate + UDP-N-acetyl-alpha-D-glucosamine = beta-D-GlcNAc-(1-&gt;4)-Mur2Ac(oyl-L-Ala-gamma-D-Glu-L-Lys-D-Ala-D-Ala)-di-trans,octa-cis-undecaprenyl diphosphate + UDP + H(+). It participates in cell wall biogenesis; peptidoglycan biosynthesis. Its function is as follows. Cell wall formation. Catalyzes the transfer of a GlcNAc subunit on undecaprenyl-pyrophosphoryl-MurNAc-pentapeptide (lipid intermediate I) to form undecaprenyl-pyrophosphoryl-MurNAc-(pentapeptide)GlcNAc (lipid intermediate II). The protein is UDP-N-acetylglucosamine--N-acetylmuramyl-(pentapeptide) pyrophosphoryl-undecaprenol N-acetylglucosamine transferase of Pediococcus pentosaceus (strain ATCC 25745 / CCUG 21536 / LMG 10740 / 183-1w).